We begin with the raw amino-acid sequence, 480 residues long: Glutamate--tRNA ligase (480 aa).

The 'HIGH' region motif lies at 21 to 31 (PSPTGYLHVGG). Residues cysteine 110, cysteine 112, cysteine 137, and histidine 139 each coordinate Zn(2+). A 'KMSKS' region motif is present at residues 248-252 (KLSKR). Lysine 251 contributes to the ATP binding site.

It belongs to the class-I aminoacyl-tRNA synthetase family. Glutamate--tRNA ligase type 1 subfamily. Monomer. The cofactor is Zn(2+).

It is found in the cytoplasm. The enzyme catalyses tRNA(Glu) + L-glutamate + ATP = L-glutamyl-tRNA(Glu) + AMP + diphosphate. In terms of biological role, catalyzes the attachment of glutamate to tRNA(Glu) in a two-step reaction: glutamate is first activated by ATP to form Glu-AMP and then transferred to the acceptor end of tRNA(Glu). This chain is Glutamate--tRNA ligase, found in Haemophilus influenzae (strain 86-028NP).